We begin with the raw amino-acid sequence, 253 residues long: 5-oxoprolinase subunit A (253 aa).

The protein belongs to the LamB/PxpA family. In terms of assembly, forms a complex composed of PxpA, PxpB and PxpC.

It carries out the reaction 5-oxo-L-proline + ATP + 2 H2O = L-glutamate + ADP + phosphate + H(+). Functionally, catalyzes the cleavage of 5-oxoproline to form L-glutamate coupled to the hydrolysis of ATP to ADP and inorganic phosphate. The sequence is that of 5-oxoprolinase subunit A from Bacillus cereus (strain ZK / E33L).